The primary structure comprises 217 residues: MAAGSRTSLLLAFALLCLPWLQEGSAFPTIPLSRLFDNAMLRAHRLHQLAFDTYQEFEEAYIPKEQKYSFLQNPQTSLCFSESIPTPSNREETQQKSNLELLRISLLLIQSWLEPVQFLRSVFANSLVYGTSYSDVYDLLKDLEEGIQTLMGRLEDGSSRTGQIFKQTYSKFDTNSHNNDALLKNYGLLYCFRKDMDKIETFLRIVQCRSVEGSCGF.

Positions 1 to 26 are cleaved as a signal peptide; it reads MAAGSRTSLLLAFALLCLPWLQEGSA. Histidine 44 serves as a coordination point for Zn(2+). The cysteines at positions 79 and 191 are disulfide-linked. The residue at position 132 (serine 132) is a Phosphoserine. Glutamate 200 is a Zn(2+) binding site. The cysteines at positions 208 and 215 are disulfide-linked.

This sequence belongs to the somatotropin/prolactin family.

The protein localises to the secreted. Functionally, plays an important role in growth control. Its major role in stimulating body growth is to stimulate the liver and other tissues to secrete IGF1. It stimulates both the differentiation and proliferation of myoblasts. It also stimulates amino acid uptake and protein synthesis in muscle and other tissues. The chain is Somatotropin (GH1) from Macaca mulatta (Rhesus macaque).